The sequence spans 369 residues: RNA pseudouridine synthase 5 (369 aa).

Residues 47-104 (APLLGWIQRIQNGQIQIDGEVVKDPNTLLRSGSKLVYSRLPWKEPDTPYSLEVLYEDD) enclose the S4 RNA-binding domain.

Belongs to the pseudouridine synthase RluA family.

It carries out the reaction a uridine in RNA = a pseudouridine in RNA. The protein is RNA pseudouridine synthase 5 of Arabidopsis thaliana (Mouse-ear cress).